The following is a 199-amino-acid chain: Dephospho-CoA kinase (199 aa).

Residues lysine 2–lysine 199 enclose the DPCK domain. Position 10–15 (serine 10–serine 15) interacts with ATP.

It belongs to the CoaE family.

The protein resides in the cytoplasm. The enzyme catalyses 3'-dephospho-CoA + ATP = ADP + CoA + H(+). It functions in the pathway cofactor biosynthesis; coenzyme A biosynthesis; CoA from (R)-pantothenate: step 5/5. In terms of biological role, catalyzes the phosphorylation of the 3'-hydroxyl group of dephosphocoenzyme A to form coenzyme A. This is Dephospho-CoA kinase from Desulfotalea psychrophila (strain LSv54 / DSM 12343).